The following is a 124-amino-acid chain: Glycine cleavage system H protein (124 aa).

Residues 22 to 104 enclose the Lipoyl-binding domain; that stretch reads LIVTGISDHA…YGKGWIYKMK (83 aa). Residue lysine 63 is modified to N6-lipoyllysine.

This sequence belongs to the GcvH family. In terms of assembly, the glycine cleavage system is composed of four proteins: P, T, L and H. The cofactor is (R)-lipoate.

The glycine cleavage system catalyzes the degradation of glycine. The H protein shuttles the methylamine group of glycine from the P protein to the T protein. The sequence is that of Glycine cleavage system H protein from Acinetobacter baylyi (strain ATCC 33305 / BD413 / ADP1).